Consider the following 694-residue polypeptide: Elongation factor G (694 aa).

A tr-type G domain is found at 6-288 (KLYRNIGIAA…GVIEYLPSPT (283 aa)). GTP-binding positions include 15 to 22 (AHVDAGKT), 86 to 90 (DTPGH), and 140 to 143 (NKMD).

This sequence belongs to the TRAFAC class translation factor GTPase superfamily. Classic translation factor GTPase family. EF-G/EF-2 subfamily.

The protein resides in the cytoplasm. Its function is as follows. Catalyzes the GTP-dependent ribosomal translocation step during translation elongation. During this step, the ribosome changes from the pre-translocational (PRE) to the post-translocational (POST) state as the newly formed A-site-bound peptidyl-tRNA and P-site-bound deacylated tRNA move to the P and E sites, respectively. Catalyzes the coordinated movement of the two tRNA molecules, the mRNA and conformational changes in the ribosome. The sequence is that of Elongation factor G from Legionella pneumophila (strain Lens).